A 349-amino-acid chain; its full sequence is tRNA pseudouridine synthase D (349 aa).

Phenylalanine 27 contributes to the substrate binding site. The active-site Nucleophile is the aspartate 80. Asparagine 129 serves as a coordination point for substrate. Residues 155–303 (GVPNYFGAQR…VEAARRAMLL (149 aa)) enclose the TRUD domain. Substrate is bound at residue phenylalanine 329.

This sequence belongs to the pseudouridine synthase TruD family.

It catalyses the reaction uridine(13) in tRNA = pseudouridine(13) in tRNA. Responsible for synthesis of pseudouridine from uracil-13 in transfer RNAs. This Escherichia coli (strain SE11) protein is tRNA pseudouridine synthase D.